Here is a 409-residue protein sequence, read N- to C-terminus: Autotransproter heptosyltransferase BAHTCr (409 aa).

Positions 107, 108, and 109 each coordinate ADP-D-glycero-beta-D-manno-heptose. The active-site Proton acceptor is the D110. The ADP-D-glycero-beta-D-manno-heptose site is built by Q224, T226, K230, R257, G302, and E326. Residues C339, C342, C358, and C370 each contribute to the Fe(3+) site.

Belongs to the glycosyltransferase 9 family. As to quaternary structure, homododecamer composed of 6 homodimers forming a ring. Fe(3+) is required as a cofactor.

It is found in the cytoplasm. It catalyses the reaction ADP-D-glycero-beta-D-manno-heptose + L-seryl-[protein] = O-(D-glycero-alpha-D-manno-heptosyl)-L-seryl-[protein] + ADP + H(+). It carries out the reaction ADP-L-glycero-beta-D-manno-heptose + L-seryl-[protein] = O-(L-glycero-alpha-D-manno-heptosyl)-L-seryl-[protein] + ADP + H(+). In terms of biological role, glycosylates autotransporter CARC. By glycosylating CARC, involved in the colonization of the mouse host gastrointestinal tract. This is Autotransproter heptosyltransferase BAHTCr from Citrobacter rodentium (strain ICC168) (Citrobacter freundii biotype 4280).